The primary structure comprises 246 residues: Putative pectinesterase 57 (246 aa).

2 N-linked (GlcNAc...) asparagine glycosylation sites follow: asparagine 127 and asparagine 143. Residue threonine 152 coordinates substrate. Asparagine 174 carries an N-linked (GlcNAc...) asparagine glycan. Aspartate 205 serves as the catalytic Proton donor. Aspartate 226 acts as the Nucleophile in catalysis.

It belongs to the pectinesterase family.

It carries out the reaction [(1-&gt;4)-alpha-D-galacturonosyl methyl ester](n) + n H2O = [(1-&gt;4)-alpha-D-galacturonosyl](n) + n methanol + n H(+). It participates in glycan metabolism; pectin degradation; 2-dehydro-3-deoxy-D-gluconate from pectin: step 1/5. In terms of biological role, acts in the modification of cell walls via demethylesterification of cell wall pectin. This chain is Putative pectinesterase 57 (PME57), found in Arabidopsis thaliana (Mouse-ear cress).